Consider the following 407-residue polypeptide: Serine hydroxymethyltransferase (407 aa).

Residues leucine 120 and 124–126 each bind (6S)-5,6,7,8-tetrahydrofolate; that span reads GHL. Lysine 229 is subject to N6-(pyridoxal phosphate)lysine.

The protein belongs to the SHMT family. As to quaternary structure, homodimer. Pyridoxal 5'-phosphate serves as cofactor.

It is found in the cytoplasm. It carries out the reaction (6R)-5,10-methylene-5,6,7,8-tetrahydrofolate + glycine + H2O = (6S)-5,6,7,8-tetrahydrofolate + L-serine. The protein operates within one-carbon metabolism; tetrahydrofolate interconversion. It participates in amino-acid biosynthesis; glycine biosynthesis; glycine from L-serine: step 1/1. Functionally, catalyzes the reversible interconversion of serine and glycine with tetrahydrofolate (THF) serving as the one-carbon carrier. This reaction serves as the major source of one-carbon groups required for the biosynthesis of purines, thymidylate, methionine, and other important biomolecules. Also exhibits THF-independent aldolase activity toward beta-hydroxyamino acids, producing glycine and aldehydes, via a retro-aldol mechanism. This is Serine hydroxymethyltransferase from Deinococcus deserti (strain DSM 17065 / CIP 109153 / LMG 22923 / VCD115).